A 416-amino-acid polypeptide reads, in one-letter code: Gamma-glutamyl phosphate reductase (416 aa).

Belongs to the gamma-glutamyl phosphate reductase family.

It localises to the cytoplasm. The catalysed reaction is L-glutamate 5-semialdehyde + phosphate + NADP(+) = L-glutamyl 5-phosphate + NADPH + H(+). Its pathway is amino-acid biosynthesis; L-proline biosynthesis; L-glutamate 5-semialdehyde from L-glutamate: step 2/2. In terms of biological role, catalyzes the NADPH-dependent reduction of L-glutamate 5-phosphate into L-glutamate 5-semialdehyde and phosphate. The product spontaneously undergoes cyclization to form 1-pyrroline-5-carboxylate. The sequence is that of Gamma-glutamyl phosphate reductase from Vibrio vulnificus (strain YJ016).